Reading from the N-terminus, the 500-residue chain is Phenylalanine--tRNA ligase alpha subunit (500 aa).

Residues threonine 343, 382–384, and phenylalanine 423 contribute to the L-phenylalanine site; that span reads QVD. Glutamate 425 lines the Mg(2+) pocket. Phenylalanine 448 lines the L-phenylalanine pocket.

The protein belongs to the class-II aminoacyl-tRNA synthetase family. Phe-tRNA synthetase alpha subunit type 2 subfamily. In terms of assembly, tetramer of two alpha and two beta subunits. Mg(2+) serves as cofactor.

It localises to the cytoplasm. The enzyme catalyses tRNA(Phe) + L-phenylalanine + ATP = L-phenylalanyl-tRNA(Phe) + AMP + diphosphate + H(+). The polypeptide is Phenylalanine--tRNA ligase alpha subunit (Thermococcus onnurineus (strain NA1)).